Consider the following 1238-residue polypeptide: Cryptic loci regulator protein 1 (1238 aa).

Disordered regions lie at residues 133-156 (TQQQVSNVSHGNFKPNSSVNTEPN), 196-237 (PFSN…PSSI), 277-303 (ASLYDRSPSKKDITSSRNTSSYNLGSM), 546-568 (QKSVSSETTLVKPSSTSSYIDTT), 696-735 (SDNTDCSLPKPSNSKLSSISSDGDASSNRMAVPDKSPFVH), and 784-824 (TLKE…QSRS). The span at 214–223 (NVKNNSKKTA) shows a compositional bias: polar residues. The segment covering 224-237 (SSVNSNHSSIPSSI) has biased composition (low complexity). Polar residues predominate over residues 291–303 (SSRNTSSYNLGSM). A compositionally biased stretch (low complexity) spans 702–723 (SLPKPSNSKLSSISSDGDASSN). A compositionally biased stretch (basic and acidic residues) spans 785–796 (LKEDASSTKQAK). Residues 810 to 819 (NDVSKNNSGE) are compositionally biased toward polar residues. The segment at 1062 to 1087 (LNCEVSNCKKCFSNYEDMFKHLQHSH) adopts a C2H2-type zinc-finger fold.

In terms of assembly, interacts with clr3.

The protein localises to the nucleus. The protein resides in the chromosome. It localises to the centromere. It is found in the telomere. Functionally, regulates silencing of the mat2 and mat3 loci. Organizes the chromatin structure of the mating-type region where it also participates in establishing the 'cold spot' for recombination. Required for proper positioning of nucleosomes at heterochromatic loci and for transcriptional gene silencing (TGS) function of the Snf2/Hdac-containing repressor complex (SHREC). The polypeptide is Cryptic loci regulator protein 1 (clr1) (Schizosaccharomyces pombe (strain 972 / ATCC 24843) (Fission yeast)).